Consider the following 326-residue polypeptide: MSNISVIGTGSYVPNNIITNDFLSTIVDTSDEWIRTRTGILERRISKEENTIYMAIESAKEAIKNANIEANDLDLIIVATLTPDNFMPSTACSVQKEIGAINALCFDISAACSGFIYGLEIACSMLKNSFRNKALIIGAENLSKIVDWKDRNTCVLFGDGAGAAILSKTKEEGILEFHSGSNGLKGEHLTCGVLKANNISNKNDRLENDNFIKMNGKEIFRFAVGAMSETICNIQEKTKWDLSEVKYIISHQANSRIIEYTAKKLNTSKDKFYMNLDKYGNTSAASIPIALDEMNKKGLLNKQDKIILVGFGGGLTFGGVAIVWSI.

Catalysis depends on residues cysteine 112 and histidine 251. The interval 252–256 is ACP-binding; it reads QANSR. Residue asparagine 281 is part of the active site.

This sequence belongs to the thiolase-like superfamily. FabH family. Homodimer.

Its subcellular location is the cytoplasm. The enzyme catalyses malonyl-[ACP] + acetyl-CoA + H(+) = 3-oxobutanoyl-[ACP] + CO2 + CoA. The protein operates within lipid metabolism; fatty acid biosynthesis. In terms of biological role, catalyzes the condensation reaction of fatty acid synthesis by the addition to an acyl acceptor of two carbons from malonyl-ACP. Catalyzes the first condensation reaction which initiates fatty acid synthesis and may therefore play a role in governing the total rate of fatty acid production. Possesses both acetoacetyl-ACP synthase and acetyl transacylase activities. Its substrate specificity determines the biosynthesis of branched-chain and/or straight-chain of fatty acids. This Clostridium botulinum (strain 657 / Type Ba4) protein is Beta-ketoacyl-[acyl-carrier-protein] synthase III.